The sequence spans 241 residues: NAD(P)H-hydrate epimerase (241 aa).

Residues 11-221 enclose the YjeF N-terminal domain; the sequence is AASLDKDLME…SIVEKYGLNC (211 aa). 65–69 is a (6S)-NADPHX binding site; it reads NNGGD. K(+) is bound by residues Asn-66 and Asp-127. (6S)-NADPHX contacts are provided by residues 131 to 137 and Asp-160; that span reads GFSFGGP. Position 163 (Ser-163) interacts with K(+).

It belongs to the NnrE/AIBP family. Requires K(+) as cofactor.

The protein resides in the cytoplasm. It localises to the mitochondrion. It catalyses the reaction (6R)-NADHX = (6S)-NADHX. The enzyme catalyses (6R)-NADPHX = (6S)-NADPHX. Its function is as follows. Catalyzes the epimerization of the S- and R-forms of NAD(P)HX, a damaged form of NAD(P)H that is a result of enzymatic or heat-dependent hydration. This is a prerequisite for the S-specific NAD(P)H-hydrate dehydratase to allow the repair of both epimers of NAD(P)HX. The polypeptide is NAD(P)H-hydrate epimerase (Aspergillus fumigatus (strain ATCC MYA-4609 / CBS 101355 / FGSC A1100 / Af293) (Neosartorya fumigata)).